Here is a 545-residue protein sequence, read N- to C-terminus: Acetamidase (545 aa).

Active-site charge relay system residues include Lys130 and Ser205. Residue Ser229 is the Acyl-ester intermediate of the active site.

Belongs to the amidase family.

It carries out the reaction a monocarboxylic acid amide + H2O = a monocarboxylate + NH4(+). It catalyses the reaction acetamide + H2O = acetate + NH4(+). Its function is as follows. Allows acetamide to be used as a sole carbon or nitrogen source. This is Acetamidase (amdS) from Aspergillus oryzae (strain ATCC 42149 / RIB 40) (Yellow koji mold).